We begin with the raw amino-acid sequence, 585 residues long: MHRWSRLFVPTLREAPSDAEVASHKFLLRSGYIRQLGAGIYSYLLFGQRSINKIVGIVREEMDKIGQEFLLPAIHPADLWRESGRWTVMGDNMFRLKDRKGAELCLGMTHEEVMTDIARNELRSYKQLPQIWYQIQNKFRDEPRPRSGLLRVRQFLMKDSYSFDLNQAGLDKSYDLHDAAYRAIFTRCGLNFVVVEADSGAMGGSGSQEFMVYTDAGEDLIASCAKCGYAANMEKATSKLAPVEELAATGDGQPELISTPGQAAIADICKFLGMQPHSDIKCVAYMAEVPSEDGKTSTWEPVAAFLRGDHFVNETKLLAVVGATELRPMQAEELEKWMHGPAGYLGPVGLTPAKKLRDGSLNVVLDLGLEGRRNLVAGANKLDYHYRNVTPGRDFTWTVAADIRNAAEGEGCPVCGEPLKVAKAVEIGHIFKLGTKYTESMGARVLDENGKEVMPVMGCYGIGIERILTASIEQNNDANGFWLPRSIAPFDVVVTITNMADETLRQAGEALAAQLEAAGYDVLLDDREERAGVKFKDADLVGIPYRFNVGKKTLEGKTELVTRATASSQDVALDAAVEALKALTA.

This sequence belongs to the class-II aminoacyl-tRNA synthetase family. ProS type 1 subfamily. As to quaternary structure, homodimer.

The protein resides in the cytoplasm. The catalysed reaction is tRNA(Pro) + L-proline + ATP = L-prolyl-tRNA(Pro) + AMP + diphosphate. Catalyzes the attachment of proline to tRNA(Pro) in a two-step reaction: proline is first activated by ATP to form Pro-AMP and then transferred to the acceptor end of tRNA(Pro). As ProRS can inadvertently accommodate and process non-cognate amino acids such as alanine and cysteine, to avoid such errors it has two additional distinct editing activities against alanine. One activity is designated as 'pretransfer' editing and involves the tRNA(Pro)-independent hydrolysis of activated Ala-AMP. The other activity is designated 'posttransfer' editing and involves deacylation of mischarged Ala-tRNA(Pro). The misacylated Cys-tRNA(Pro) is not edited by ProRS. The sequence is that of Proline--tRNA ligase from Acidobacterium capsulatum (strain ATCC 51196 / DSM 11244 / BCRC 80197 / JCM 7670 / NBRC 15755 / NCIMB 13165 / 161).